Consider the following 461-residue polypeptide: Tubulin gamma-2 chain (461 aa).

142-148 (AGGTGSG) lines the GTP pocket.

Belongs to the tubulin family.

Its subcellular location is the cytoplasm. It localises to the cytoskeleton. The protein localises to the microtubule organizing center. The protein resides in the centrosome. Tubulin is the major constituent of microtubules. The gamma chain is found at microtubule organizing centers (MTOC) such as the spindle poles or the centrosome, suggesting that it is involved in the minus-end nucleation of microtubule assembly. In Euplotoides octocarinatus (Freshwater ciliate), this protein is Tubulin gamma-2 chain.